A 933-amino-acid polypeptide reads, in one-letter code: Bifunctional uridylyltransferase/uridylyl-removing enzyme (933 aa).

Positions 1-390 are uridylyltransferase; that stretch reads MLSTRAASAD…RLAALARRKD (390 aa). The uridylyl-removing stretch occupies residues 391 to 745; sequence VDGFVVDGER…TRIDRGRAIT (355 aa). Positions 506 to 628 constitute an HD domain; that stretch reads VDEHTLFALG…VQSPERLRLL (123 aa). ACT domains are found at residues 746–829 and 859–933; these read EVTI…DLTK and VIEV…DPSA.

The protein belongs to the GlnD family. Mg(2+) is required as a cofactor.

The enzyme catalyses [protein-PII]-L-tyrosine + UTP = [protein-PII]-uridylyl-L-tyrosine + diphosphate. It carries out the reaction [protein-PII]-uridylyl-L-tyrosine + H2O = [protein-PII]-L-tyrosine + UMP + H(+). With respect to regulation, uridylyltransferase (UTase) activity is inhibited by glutamine, while glutamine activates uridylyl-removing (UR) activity. Uridylylation process is dependent on ATP and 2-oxoglutarate, which are effector molecules that likely bind to PII proteins and control their activity. Its function is as follows. Modifies, by uridylylation and deuridylylation, the PII regulatory proteins GlnB and GlnZ, in response to the nitrogen status of the cell that GlnD senses through the glutamine level. Under low glutamine levels, catalyzes the conversion of the PII proteins and UTP to PII-UMP and PPi, while under higher glutamine levels, GlnD hydrolyzes PII-UMP to PII and UMP (deuridylylation). Thus, controls uridylylation state and activity of the PII proteins, and plays an important role in the regulation of nitrogen fixation and metabolism. In Azospirillum brasilense, this protein is Bifunctional uridylyltransferase/uridylyl-removing enzyme.